A 54-amino-acid chain; its full sequence is Ovomucoid (54 aa).

Residues 4–54 enclose the Kazal-like domain; the sequence is VDCSEHPKPACTLEDRPLCGSDNKIYSNKCDFCNAVLESNGTLTLSHFGKC. Intrachain disulfides connect C6–C36, C14–C33, and C22–C54. N43 is a glycosylation site (N-linked (GlcNAc...) asparagine).

Its subcellular location is the secreted. This Argusianus argus (Great argus) protein is Ovomucoid.